We begin with the raw amino-acid sequence, 464 residues long: Fumarate hydratase class II (464 aa).

Substrate is bound by residues 98-100 (SGT), 129-132 (HPND), 139-141 (SSN), and Thr-187. His-188 serves as the catalytic Proton donor/acceptor. The active site involves Ser-318. Residues Ser-319 and 324–326 (KVN) each bind substrate.

Belongs to the class-II fumarase/aspartase family. Fumarase subfamily. In terms of assembly, homotetramer.

Its subcellular location is the cytoplasm. The catalysed reaction is (S)-malate = fumarate + H2O. It functions in the pathway carbohydrate metabolism; tricarboxylic acid cycle; (S)-malate from fumarate: step 1/1. In terms of biological role, involved in the TCA cycle. Catalyzes the stereospecific interconversion of fumarate to L-malate. The chain is Fumarate hydratase class II from Pasteurella multocida (strain Pm70).